The primary structure comprises 122 residues: Large ribosomal subunit protein uL14 (122 aa).

This sequence belongs to the universal ribosomal protein uL14 family. As to quaternary structure, part of the 50S ribosomal subunit. Forms a cluster with proteins L3 and L19. In the 70S ribosome, L14 and L19 interact and together make contacts with the 16S rRNA in bridges B5 and B8.

In terms of biological role, binds to 23S rRNA. Forms part of two intersubunit bridges in the 70S ribosome. This chain is Large ribosomal subunit protein uL14, found in Bifidobacterium adolescentis (strain ATCC 15703 / DSM 20083 / NCTC 11814 / E194a).